The chain runs to 580 residues: Mitogen-activated protein kinase 12 (580 aa).

Residues 18-38 are disordered; the sequence is RTASGSNQSSNAGEEAASSDL. Residues 20–29 show a composition bias toward polar residues; that stretch reads ASGSNQSSNA. The Protein kinase domain occupies 87–378; sequence YQIQEVIGKG…AEEALADPYF (292 aa). ATP-binding positions include 93 to 101 and Lys-116; that span reads IGKGSYGVV. Catalysis depends on Asp-213, which acts as the Proton acceptor. Thr-249 carries the phosphothreonine modification. Residues 249 to 251 carry the TXY motif; that stretch reads TDY. Tyr-251 carries the phosphotyrosine modification. The required for kinase activity and nuclear localization stretch occupies residues 325 to 506; the sequence is ARRYLSTMRK…SADSVARTTV (182 aa). Positions 458 to 580 are disordered; the sequence is YSKGERGSPL…LSEQVSRMHS (123 aa). Positions 502–543 are enriched in polar residues; it reads ARTTVSPPMSQDAQQHGSAGQNGVTSTDLSSRSYLKSASISA. Residues 554 to 566 show a composition bias toward acidic residues; the sequence is EPEDDYISEEMEG.

The protein belongs to the protein kinase superfamily. CMGC Ser/Thr protein kinase family. MAP kinase subfamily. Interacts with EREBP1. In terms of processing, dually phosphorylated on Thr-249 and Tyr-251, which activates the enzyme. Phosphorylated on tyrosine residue.

Its subcellular location is the cytoplasm. The protein resides in the nucleus. The catalysed reaction is L-seryl-[protein] + ATP = O-phospho-L-seryl-[protein] + ADP + H(+). It carries out the reaction L-threonyl-[protein] + ATP = O-phospho-L-threonyl-[protein] + ADP + H(+). With respect to regulation, activated by threonine and tyrosine phosphorylation. Activated in response to hydrogen peroxide, salicylic acid, jasmonic acid, ethylene, fungal elicitor and infection with rice blast fungus (M.grisea). May be involved in defense signaling pathway. Phosphorylates EREBP1 transcriptional activator in vitro. Enhances DNA-binding activity of EREBP1 to the GCC box element of pathogenesis-related (PR) gene promoters. The protein is Mitogen-activated protein kinase 12 (MPK12) of Oryza sativa subsp. japonica (Rice).